The chain runs to 452 residues: Transcription factor AP-2-delta (452 aa).

Phosphoserine; by PKA is present on Ser-239. An H-S-H (helix-span-helix), dimerization region spans residues 280–410 (RRKAANVTLL…VLSEMLNYLE (131 aa)). Residues 416-452 (KNGGAADSGQGHANSEKAPLRKTSEAAVKEGKTEKTD) form a disordered region. The span at 429–452 (NSEKAPLRKTSEAAVKEGKTEKTD) shows a compositional bias: basic and acidic residues.

The protein belongs to the AP-2 family. In terms of assembly, binds DNA as a dimer. Can form homodimers or heterodimers with other AP-2 family members. As to expression, highly expressed in brain, placenta, skeletal muscle, thymus, small intestine, and prostate, and expressed at lower levels in leukocyte, spleen, testis, ovary and colon. Barely detectable in heart, kidney, liver, lung or pancreas.

The protein resides in the nucleus. In terms of biological role, sequence-specific DNA-binding protein that interacts with inducible viral and cellular enhancer elements to regulate transcription of selected genes. AP-2 factors bind to the consensus sequence 5'-GCCNNNGGC-3' and activate genes involved in a large spectrum of important biological functions including proper eye, face, body wall, limb and neural tube development. They also suppress a number of genes including MCAM/MUC18, C/EBP alpha and MYC. This Homo sapiens (Human) protein is Transcription factor AP-2-delta.